A 194-amino-acid polypeptide reads, in one-letter code: Thioredoxin O1, mitochondrial (194 aa).

The transit peptide at 1–42 (MKGNWSIVRKVLHRQFSTLRSSTPSSRLSTSIRPLVLAPNSI) directs the protein to the mitochondrion. Position 75 is a phosphoserine (Ser-75). A Thioredoxin domain is found at 89-194 (VKSEEEFINA…LKNLMEQLYK (106 aa)). Residues Cys-118 and Cys-121 each act as nucleophile in the active site. Cys-118 and Cys-121 form a disulfide bridge.

It belongs to the thioredoxin family. Plant O-type subfamily.

The protein localises to the mitochondrion matrix. Functionally, thiol-disulfide oxidoreductase that may participate in various redox reactions. Possesses insulin disulfide bonds reducing activity. Reduced by thioredoxin reductases NTRA and NTRB. This is Thioredoxin O1, mitochondrial from Arabidopsis thaliana (Mouse-ear cress).